Here is a 925-residue protein sequence, read N- to C-terminus: Coronin-7 (925 aa).

4 WD repeats span residues 75–115 (CHSD…QALP), 124–163 (PEDLPVEVLQFHPTSDGILVSAAGTTVKVWDAAKQQPLTE), 166–205 (AHGDLVQSAVWSRDGALVGTACKDKQLRIFDPRTKPQASQ), and 209–253 (AHEN…SALA). 2 disordered regions span residues 196–216 (DPRTKPQASQSTQAHENSRDS) and 399–465 (LVPP…SLQS). Polar residues predominate over residues 201-210 (PQASQSTQAH). The span at 429–460 (SSPPSSLTSPSTPSSLGPTLSSTSGIGTGPSL) shows a compositional bias: low complexity. 2 positions are modified to phosphoserine: Ser-462 and Ser-465. Residue Lys-472 forms a Glycyl lysine isopeptide (Lys-Gly) (interchain with G-Cter in ubiquitin) linkage. 3 WD repeats span residues 542 to 582 (QNGA…LEEV), 592 to 632 (GHME…DRLK), and 635 to 674 (GHQDQIFSLAWSPDGQQLATVCKDGRVRVYRPRSGPEPLQ). Lys-680 is covalently cross-linked (Glycyl lysine isopeptide (Lys-Gly) (interchain with G-Cter in ubiquitin)). One copy of the WD 8 repeat lies at 728 to 768 (DVAPSTLVPSYEPRHWPGAPDWQGDARVFLYELLPESPFFM). Residues 857-925 (LQPPDMSPVS…FEGVDEDEWD (69 aa)) form a disordered region. Residues 866–882 (SQAPREAPARRAPSSAQ) show a composition bias toward low complexity. A compositionally biased stretch (basic and acidic residues) spans 884-896 (LEEKSDQQKKEEL). Residue Ser-915 is modified to Phosphoserine.

The protein belongs to the WD repeat coronin family. In terms of assembly, interacts with clathrin adapter AP1 complex. This interaction takes place at Golgi membranes and not AP1-positive endosomal membranes. Interacts (when ubiquitinated at Lys-472) with EPS15. The membrane-associated form is phosphorylated on tyrosine residues. Post-translationally, ubiquitinated via 'Lys-33'-linked ubiquitin chains by the BCR(KLHL20) E3 ubiquitin ligase complex: 'Lys-33'-linked ubiquitination promotes interaction with EPS15 and facilitates actin polymerization at the trans-Golgi network, thereby facilitating post-Golgi trafficking. Deubiquitinated by ZRANB1/TRABID.

It localises to the golgi apparatus membrane. The protein resides in the golgi apparatus. It is found in the trans-Golgi network. Its subcellular location is the cytoplasmic vesicle. The protein localises to the cytoplasm. It localises to the cytosol. Its function is as follows. F-actin regulator involved in anterograde Golgi to endosome transport: upon ubiquitination via 'Lys-33'-linked ubiquitin chains by the BCR(KLHL20) E3 ubiquitin ligase complex, interacts with EPS15 and localizes to the trans-Golgi network, where it promotes actin polymerization, thereby facilitating post-Golgi trafficking. May play a role in the maintenance of the Golgi apparatus morphology. The protein is Coronin-7 (CORO7) of Pongo abelii (Sumatran orangutan).